Reading from the N-terminus, the 991-residue chain is Gingipain R1 (991 aa).

The N-terminal stretch at 1–24 is a signal peptide; it reads MKNLNKFVSIALCSSLLGGMAFAQ. Positions 25–227 are excised as a propeptide; it reads QTELGRNPNV…RMFMNYEPGR (203 aa). Asp-305, Val-327, Asp-330, Tyr-332, Glu-334, Glu-388, and His-393 together coordinate Ca(2+). Residue His-438 is the Proton donor of the active site. Cys-471 serves as the catalytic Nucleophile. Ca(2+) contacts are provided by Phe-476, Glu-485, Asp-519, Glu-520, Glu-523, and His-529.

Belongs to the peptidase C25 family.

The protein localises to the secreted. The enzyme catalyses Hydrolysis of proteins and small molecule substrates, with a preference for Arg in P1.. Requires cysteine for activation and Ca(2+) and/or Mg(2+) for stabilization. It is stimulated by glycine-containing dipeptides. It is resistant to inhibition by proteinase inhibitors in human plasma. Thiol protease. Acts synergistically with RgpB to catalyze the maturation of fimbrial subunits, such as FimA. Its proteolytic activity is a major factor in both periodontal tissue destruction and in evasion of host defense mechanisms. The sequence is that of Gingipain R1 (rgpA) from Porphyromonas gingivalis (Bacteroides gingivalis).